We begin with the raw amino-acid sequence, 200 residues long: Eukaryotic translation initiation factor isoform 4E (200 aa).

MRNA is bound by residues 44-49 (QGVAWG), K76, and 94-95 (WE). C99 and C138 are disulfide-bonded. Residues 145–150 (RRSQDK) and 189–192 (KRER) each bind mRNA.

This sequence belongs to the eukaryotic initiation factor 4E family. EIF4F is a multi-subunit complex, the composition of which varies with external and internal environmental conditions. It is composed of at least EIF4A, EIF4E and EIF4G. EIF4E is also known to interact with other partners. In higher plants two isoforms of EIF4F have been identified, named isoform EIF4F and isoform EIF(iso)4F. Isoform EIF4F has subunits p220 and p26, whereas isoform EIF(iso)4F has subunits p82 and p28. In terms of assembly, (Microbial infection) Interacts with viral genome-linked protein (VPg); this interaction is possible in susceptible hosts but impaired in resistant plants. In terms of processing, according to the redox status, the Cys-99-Cys-138 disulfide bridge may have a role in regulating protein function by affecting its ability to bind capped mRNA. As to expression, mostly expressed in roots and leaves, and, to a lower extent, in stems, flowers and immature green fruits.

The protein localises to the cytoplasm. Its subcellular location is the nucleus. Its function is as follows. Component of the protein complex eIF4F, which is involved in the recognition of the mRNA cap, ATP-dependent unwinding of 5'-terminal secondary structure and recruitment of mRNA to the ribosome. Recognizes and binds the 7-methylguanosine-containing mRNA cap during an early step in the initiation of protein synthesis and facilitates ribosome binding by inducing the unwinding of the mRNAs secondary structures. Key component of recessive resistance to potyviruses. In terms of biological role, (Microbial infection) Susceptibility host factor required for viral infection by recruiting viral RNAs to the host ribosomal complex via an interaction with viral genome-linked protein (VPg). The polypeptide is Eukaryotic translation initiation factor isoform 4E (Solanum lycopersicum (Tomato)).